We begin with the raw amino-acid sequence, 227 residues long: Phosphoribosylaminoimidazole-succinocarboxamide synthase (227 aa).

The protein belongs to the SAICAR synthetase family.

The catalysed reaction is 5-amino-1-(5-phospho-D-ribosyl)imidazole-4-carboxylate + L-aspartate + ATP = (2S)-2-[5-amino-1-(5-phospho-beta-D-ribosyl)imidazole-4-carboxamido]succinate + ADP + phosphate + 2 H(+). It participates in purine metabolism; IMP biosynthesis via de novo pathway; 5-amino-1-(5-phospho-D-ribosyl)imidazole-4-carboxamide from 5-amino-1-(5-phospho-D-ribosyl)imidazole-4-carboxylate: step 1/2. The protein is Phosphoribosylaminoimidazole-succinocarboxamide synthase of Clostridium tetani (strain Massachusetts / E88).